The sequence spans 175 residues: Large ribosomal subunit protein uL10 (175 aa).

It belongs to the universal ribosomal protein uL10 family. In terms of assembly, part of the ribosomal stalk of the 50S ribosomal subunit. The N-terminus interacts with L11 and the large rRNA to form the base of the stalk. The C-terminus forms an elongated spine to which L12 dimers bind in a sequential fashion forming a multimeric L10(L12)X complex.

Its function is as follows. Forms part of the ribosomal stalk, playing a central role in the interaction of the ribosome with GTP-bound translation factors. The polypeptide is Large ribosomal subunit protein uL10 (Cyanothece sp. (strain PCC 7425 / ATCC 29141)).